The primary structure comprises 959 residues: Lon protease homolog, mitochondrial (959 aa).

A mitochondrion-targeting transit peptide spans Met1–Gly67. Disordered regions lie at residues Gly77–Gly102 and Arg218–Glu257. Residues Glu91 to Gly102 show a composition bias toward gly residues. Residues Leu124–Phe370 enclose the Lon N-terminal domain. Residues His233–Lys243 show a composition bias toward basic residues. The span at Lys244–Ala256 shows a compositional bias: basic and acidic residues. Residue Gly523–Thr530 participates in ATP binding. The region spanning Val759–Asp949 is the Lon proteolytic domain. Catalysis depends on residues Ser855 and Lys898.

It belongs to the peptidase S16 family. Homohexamer. Organized in a ring with a central cavity. The ATP-binding and proteolytic domains (AP-domain) form a hexameric chamber, while the N-terminal domain is arranged as a trimer of dimers. DNA and RNA binding is stimulated by substrate and inhibited by ATP binding. Interacts with TWNK and mitochondrial DNA polymerase subunit POLG. In terms of tissue distribution, duodenum, heart, lung and liver, but not thymus.

The protein resides in the mitochondrion matrix. The enzyme catalyses Hydrolysis of proteins in presence of ATP.. With respect to regulation, peptidase activity is subject to substrate inhibition by ATP. Functionally, ATP-dependent serine protease that mediates the selective degradation of misfolded, unassembled or oxidatively damaged polypeptides as well as certain short-lived regulatory proteins in the mitochondrial matrix. Endogenous substrates include mitochondrial steroidogenic acute regulatory (StAR) protein, DELE1, helicase Twinkle (TWNK) and the large ribosomal subunit protein MRPL32/bL32m. MRPL32/bL32m is protected from degradation by LONP1 when it is bound to a nucleic acid (RNA), but TWNK is not. May also have a chaperone function in the assembly of inner membrane protein complexes. Participates in the regulation of mitochondrial gene expression and in the maintenance of the integrity of the mitochondrial genome. Binds to mitochondrial promoters and RNA in a single-stranded, site-specific, and strand-specific manner. May regulate mitochondrial DNA replication and/or gene expression using site-specific, single-stranded DNA binding to target the degradation of regulatory proteins binding to adjacent sites in mitochondrial promoters. In Homo sapiens (Human), this protein is Lon protease homolog, mitochondrial.